Here is a 344-residue protein sequence, read N- to C-terminus: DNA polymerase IV (344 aa).

A UmuC domain is found at 2–183; it reads IMLIDFDYFF…IKINDIPGIG (182 aa). Mg(2+) contacts are provided by aspartate 6 and aspartate 105. Glutamate 106 is an active-site residue.

Belongs to the DNA polymerase type-Y family. In terms of assembly, monomer. The cofactor is Mg(2+).

It localises to the cytoplasm. It carries out the reaction DNA(n) + a 2'-deoxyribonucleoside 5'-triphosphate = DNA(n+1) + diphosphate. Functionally, poorly processive, error-prone DNA polymerase involved in untargeted mutagenesis. Copies undamaged DNA at stalled replication forks, which arise in vivo from mismatched or misaligned primer ends. These misaligned primers can be extended by PolIV. Exhibits no 3'-5' exonuclease (proofreading) activity. May be involved in translesional synthesis. This Picrophilus torridus (strain ATCC 700027 / DSM 9790 / JCM 10055 / NBRC 100828 / KAW 2/3) protein is DNA polymerase IV.